The sequence spans 142 residues: Large ribosomal subunit protein uL13 (142 aa).

The protein belongs to the universal ribosomal protein uL13 family. In terms of assembly, part of the 50S ribosomal subunit.

In terms of biological role, this protein is one of the early assembly proteins of the 50S ribosomal subunit, although it is not seen to bind rRNA by itself. It is important during the early stages of 50S assembly. In Salmonella agona (strain SL483), this protein is Large ribosomal subunit protein uL13.